Here is a 1148-residue protein sequence, read N- to C-terminus: MGKSSPVCLYLILQGLLLFDTVNAKNLNELKMECPHTIGLGQGLVVGSVELPPVPIQQIESLKLESSCNFDLHTSTAGQQSFTKWTWETKGDLAENTQASSTSFQTKSSEVNLRGLCLIPTLVVETAARMRKTIACYDLSCNQTVCQPTVYLMGPIQTCLTTKSCLLGLGDQRIQVNYERTYCVSGQLVEGVCFNPIHTMALSQPSHTYDIVTIMVRCFLVIKKVTSGDSMKIEKNFETLVQKTGCTANGFQGYYICLIGSSSEPLYVPTLDDYRSAEVLSRMAFAPHGEDHDIEKNAVSALRIAGKVTGKAPSTESSDTVQGIAFSGSPLYTSTGVLTAKDDPVYVWAPGIIMEGNHSVCEKKTLPLTWTGFIPLPGEIEKTTQCTVFCTLAGPGADCEAYSETGIFNISSPTCLINRVQRFRGAEQQIKFVCQRVDMDITVYCNGVKKVILTKTLVIGQCIYTFTSIFSMIPGIAHSLAVELCVPGLHGWATVLLLLTFCFGWVLIPTITMILLKILIAFAYLCSKYNTDSKFRILVEKVKKEYQKTMGSMVCEVCQYECETAKELESHRKSCSIGSCPYCLNPSEATPSALQAHFKVCKLTSRFQENLKKSLTMYEPMQGCYRTLSLFRYRSRFFVGLVWCMLLVLELIVWAASAETQNLNDGWTDTAHGSGIIPMKADLELDFSLPSSASYTYRRQLQNPANEQEKIPFHLQISKQVIHAEIQHLGHWMDATFNLKTAFHCYGSCEKYAYPWQTAGCFVEKDYEYETGWGCNPPDCPGVGTGCTACGVYLDKLKSVGKVFKIVSLRYTRKVCIQLGTGQTCKTVDSNDCLITTSVKVCLIGTISKFQPSDTLLFLGPLQQGGLIFKQWCTTTCQFGDPGDIMSTPTGMKCPELNGSFRKKCAFATTPVCQFDGNTISGYKRMVATKDSFQSFNVTEPHISTSALEWIDLDSSLRDHINVIVSRDLSFQDLSETPCQVDLTTSATDGAWGSGVGFNLVCTVSLTECSAFLTSIKACHAAMCYGSTTTNLVRGQNTIHVVGKGGHSGSKFMCCHDTKCSSTGLVAAAPHLDRVTGFNQADSDKIFDDGAPECGMSCWFKKLGEWVLGVLNGNWMVVAVLIALLILSIFLFALCCPRRPSYKKDHKP.

The N-terminal stretch at M1–N23 is a signal peptide. Over A24–L496 the chain is Lumenal. 6 disulfides stabilise this stretch: C34-C159, C68-C165, C117-C136, C141-C146, C183-C193, and C218-C257. The N-linked (GlcNAc...) asparagine; by host glycan is linked to N142. N357 is a glycosylation site (N-linked (GlcNAc...) asparagine; by host). Intrachain disulfides connect C386–C445, C390–C399, C415–C434, and C462–C485. Residue N409 is glycosylated (N-linked (GlcNAc...) asparagine; by host). Residues L497–K517 form a helical membrane-spanning segment. The Cytoplasmic portion of the chain corresponds to I518 to F637. The binding to the ribonucleoprotein stretch occupies residues C526–K543. 2 CCHC-type zinc fingers span residues C555 to C575 and C580 to C601. 2 binding to the ribonucleoprotein regions span residues F598–L615 and M621–S635. Positions M621 to C644 constitute an ITAM domain. The short motif at Y625–L628 is the YxxL element. Residues F638 to A658 traverse the membrane as a helical segment. Over E659–W1115 the chain is Lumenal. Disulfide bonds link C745-C780, C749-C787, C761-C894, C775-C905, C790-C913, C816-C825, C833-C842, and C873-C877. The segment at Y767–C787 is fusion loop. N-linked (GlcNAc...) asparagine; by host glycosylation occurs at N937. 5 disulfides stabilise this stretch: C979-C1009, C1002-C1054, C1019-C1024, C1055-C1060, and C1094-C1098. Residues M1116–C1136 traverse the membrane as a helical segment. The interval L1131–P1148 is binding to the ribonucleoprotein. Residues P1137–P1148 lie on the Cytoplasmic side of the membrane.

This sequence belongs to the hantavirus envelope glycoprotein family. Homodimer. Homotetramer; forms heterotetrameric Gn-Gc spikes in the pre-fusion conformation. Interacts (via C-terminus) with the nucleoprotein. Interacts with host TUFM; this interaction contributes to the virus-induced degradation of mitochondria by autophagy, which leads to degradation of host MAVS and inhibition of type I interferon (IFN) responses. Interacts with host MAP1LC3B; this interaction contributes to the virus-induced degradation of mitochondria by autophagy, which leads to degradation of host MAVS and inhibition of type I interferon (IFN) responses. In terms of assembly, homodimer. Homotetramer; forms heterotetrameric Gn-Gc spikes in the pre-fusion conformation. Homotrimer; forms homotrimer in the post-fusion conformation at acidic pH. Interacts (via C-terminus) with the nucleoprotein. In terms of processing, envelope polyprotein precursor is quickly cleaved in vivo just after synthesis, presumably by host signal peptidase.

It localises to the virion membrane. The protein localises to the host cell surface. It is found in the host Golgi apparatus membrane. The protein resides in the host endoplasmic reticulum membrane. Its subcellular location is the host mitochondrion. Forms homotetramers with glycoprotein C at the surface of the virion. Attaches the virion to host cell receptors including integrin ITGAV/ITGB3. This attachment induces virion internalization predominantly through clathrin-dependent endocytosis. Mediates the assembly and budding of infectious virus particles through its interaction with the nucleocapsid protein and the viral genome. May dysregulate normal immune and endothelial cell responses through an ITAM motif. Translocates to mitochondria, binds to host TUFM and recruits MAP1LC3B. These interactions induce mitochondrial autophagy and therefore destruction of host MAVS leading to inhibition of type I interferon (IFN) responses. Concomitant breakdown of glycoprotein N is apparently prevented by the nucleoprotein that may inhibit Gn-stimulated autophagosome-lysosome fusion. Interacts with the viral genomic RNA. In terms of biological role, forms heterooctamers with glycoprotein N at the surface of the virion. Attaches the virion to host cell receptors including integrin ITGAV/ITGB3. This attachment induces virion internalization predominantly through clathrin-dependent endocytosis. Class II fusion protein that promotes fusion of viral membrane with host endosomal membrane after endocytosis of the virion. The protein is Envelopment polyprotein (GP) of Homo sapiens (Human).